Consider the following 236-residue polypeptide: Small ribosomal subunit protein uS2c (236 aa).

Belongs to the universal ribosomal protein uS2 family.

It localises to the plastid. The protein localises to the chloroplast. This is Small ribosomal subunit protein uS2c (rps2) from Lactuca sativa (Garden lettuce).